A 207-amino-acid polypeptide reads, in one-letter code: Ribosomal RNA small subunit methyltransferase G (207 aa).

S-adenosyl-L-methionine contacts are provided by residues Gly73, Leu78, 124-125 (VE), and Arg139.

This sequence belongs to the methyltransferase superfamily. RNA methyltransferase RsmG family.

It localises to the cytoplasm. The catalysed reaction is guanosine(527) in 16S rRNA + S-adenosyl-L-methionine = N(7)-methylguanosine(527) in 16S rRNA + S-adenosyl-L-homocysteine. Functionally, specifically methylates the N7 position of guanine in position 527 of 16S rRNA. The sequence is that of Ribosomal RNA small subunit methyltransferase G from Escherichia fergusonii (strain ATCC 35469 / DSM 13698 / CCUG 18766 / IAM 14443 / JCM 21226 / LMG 7866 / NBRC 102419 / NCTC 12128 / CDC 0568-73).